The following is a 479-amino-acid chain: 3-phytase B (479 aa).

Residues 1-19 form the signal peptide; the sequence is MPRTSLLTLACALATGASA. His-82 serves as the catalytic Nucleophile. N-linked (GlcNAc...) asparagine glycosylation is found at Asn-106, Asn-191, Asn-227, Asn-250, and Asn-315. Asp-338 acts as the Proton donor in catalysis. Asn-425, Asn-442, and Asn-458 each carry an N-linked (GlcNAc...) asparagine glycan.

It belongs to the histidine acid phosphatase family.

The enzyme catalyses 1D-myo-inositol hexakisphosphate + H2O = 1D-myo-inositol 1,2,4,5,6-pentakisphosphate + phosphate. Catalyzes the hydrolysis of inorganic orthophosphate from phytate. The sequence is that of 3-phytase B (phyB) from Aspergillus niger.